Reading from the N-terminus, the 271-residue chain is Formamidopyrimidine-DNA glycosylase (271 aa).

Pro-2 functions as the Schiff-base intermediate with DNA in the catalytic mechanism. Residue Glu-3 is the Proton donor of the active site. The active-site Proton donor; for beta-elimination activity is Lys-58. Residues His-92, Arg-111, and Arg-152 each contribute to the DNA site. An FPG-type zinc finger spans residues 237-271 (TVYGREGEPCKQCGRVLKHAMIGQRATVWCGSCQR). The active-site Proton donor; for delta-elimination activity is Arg-261.

It belongs to the FPG family. Monomer. The cofactor is Zn(2+).

It carries out the reaction Hydrolysis of DNA containing ring-opened 7-methylguanine residues, releasing 2,6-diamino-4-hydroxy-5-(N-methyl)formamidopyrimidine.. The catalysed reaction is 2'-deoxyribonucleotide-(2'-deoxyribose 5'-phosphate)-2'-deoxyribonucleotide-DNA = a 3'-end 2'-deoxyribonucleotide-(2,3-dehydro-2,3-deoxyribose 5'-phosphate)-DNA + a 5'-end 5'-phospho-2'-deoxyribonucleoside-DNA + H(+). Its function is as follows. Involved in base excision repair of DNA damaged by oxidation or by mutagenic agents. Acts as a DNA glycosylase that recognizes and removes damaged bases. Has a preference for oxidized purines, such as 7,8-dihydro-8-oxoguanine (8-oxoG). Has AP (apurinic/apyrimidinic) lyase activity and introduces nicks in the DNA strand. Cleaves the DNA backbone by beta-delta elimination to generate a single-strand break at the site of the removed base with both 3'- and 5'-phosphates. This chain is Formamidopyrimidine-DNA glycosylase, found in Xanthomonas oryzae pv. oryzae (strain MAFF 311018).